The chain runs to 968 residues: Glycine dehydrogenase (decarboxylating) (968 aa).

K712 bears the N6-(pyridoxal phosphate)lysine mark.

Belongs to the GcvP family. As to quaternary structure, the glycine cleavage system is composed of four proteins: P, T, L and H. It depends on pyridoxal 5'-phosphate as a cofactor.

The catalysed reaction is N(6)-[(R)-lipoyl]-L-lysyl-[glycine-cleavage complex H protein] + glycine + H(+) = N(6)-[(R)-S(8)-aminomethyldihydrolipoyl]-L-lysyl-[glycine-cleavage complex H protein] + CO2. In terms of biological role, the glycine cleavage system catalyzes the degradation of glycine. The P protein binds the alpha-amino group of glycine through its pyridoxal phosphate cofactor; CO(2) is released and the remaining methylamine moiety is then transferred to the lipoamide cofactor of the H protein. The sequence is that of Glycine dehydrogenase (decarboxylating) from Prochlorococcus marinus (strain NATL1A).